The following is a 91-amino-acid chain: Anthranilate synthase component 2 (91 aa).

Positions N4–A91 constitute a Glutamine amidotransferase type-1 domain. Residue G55–G57 coordinates L-glutamine. C82 serves as the catalytic Nucleophile; for GATase activity. Q86 contacts L-glutamine.

As to quaternary structure, heterotetramer consisting of two non-identical subunits: a beta subunit (TrpG) and a large alpha subunit (TrpE).

It catalyses the reaction chorismate + L-glutamine = anthranilate + pyruvate + L-glutamate + H(+). It participates in amino-acid biosynthesis; L-tryptophan biosynthesis; L-tryptophan from chorismate: step 1/5. In terms of biological role, part of a heterotetrameric complex that catalyzes the two-step biosynthesis of anthranilate, an intermediate in the biosynthesis of L-tryptophan. In the first step, the glutamine-binding beta subunit (TrpG) of anthranilate synthase (AS) provides the glutamine amidotransferase activity which generates ammonia as a substrate that, along with chorismate, is used in the second step, catalyzed by the large alpha subunit of AS (TrpE) to produce anthranilate. In the absence of TrpG, TrpE can synthesize anthranilate directly from chorismate and high concentrations of ammonia. This Acetivibrio thermocellus (Hungateiclostridium thermocellum) protein is Anthranilate synthase component 2 (trpG).